Reading from the N-terminus, the 185-residue chain is Elongation factor P (185 aa).

It belongs to the elongation factor P family.

It localises to the cytoplasm. The protein operates within protein biosynthesis; polypeptide chain elongation. Its function is as follows. Involved in peptide bond synthesis. Stimulates efficient translation and peptide-bond synthesis on native or reconstituted 70S ribosomes in vitro. Probably functions indirectly by altering the affinity of the ribosome for aminoacyl-tRNA, thus increasing their reactivity as acceptors for peptidyl transferase. The polypeptide is Elongation factor P (Clostridium novyi (strain NT)).